The primary structure comprises 242 residues: ATP synthase subunit a (242 aa).

Transmembrane regions (helical) follow at residues 29-49, 84-104, 114-134, 140-160, 181-201, and 206-226; these read SAVA…TAFV, FFPL…LGMV, IIVT…YGIY, FFSL…MVII, VAGH…TWLF, and IALV…QAYI.

Belongs to the ATPase A chain family. In terms of assembly, F-type ATPases have 2 components, CF(1) - the catalytic core - and CF(0) - the membrane proton channel. CF(1) has five subunits: alpha(3), beta(3), gamma(1), delta(1), epsilon(1). CF(0) has three main subunits: a(1), b(2) and c(9-12). The alpha and beta chains form an alternating ring which encloses part of the gamma chain. CF(1) is attached to CF(0) by a central stalk formed by the gamma and epsilon chains, while a peripheral stalk is formed by the delta and b chains.

The protein localises to the cell inner membrane. Functionally, key component of the proton channel; it plays a direct role in the translocation of protons across the membrane. The polypeptide is ATP synthase subunit a (Orientia tsutsugamushi (strain Ikeda) (Rickettsia tsutsugamushi)).